A 430-amino-acid chain; its full sequence is Adenylosuccinate synthetase (430 aa).

Residues 12–18 (GDEGKGK) and 40–42 (GHT) each bind GTP. Catalysis depends on Asp13, which acts as the Proton acceptor. Asp13 and Gly40 together coordinate Mg(2+). Residues 13–16 (DEGK), 38–41 (NAGH), Thr128, Arg142, Gln223, Thr238, and Arg302 each bind IMP. His41 functions as the Proton donor in the catalytic mechanism. 298–304 (TTTGRPR) lines the substrate pocket. Residues Arg304, 330–332 (SID), and 412–414 (SVG) contribute to the GTP site.

This sequence belongs to the adenylosuccinate synthetase family. As to quaternary structure, homodimer. Requires Mg(2+) as cofactor.

The protein localises to the cytoplasm. It carries out the reaction IMP + L-aspartate + GTP = N(6)-(1,2-dicarboxyethyl)-AMP + GDP + phosphate + 2 H(+). It participates in purine metabolism; AMP biosynthesis via de novo pathway; AMP from IMP: step 1/2. Functionally, plays an important role in the de novo pathway of purine nucleotide biosynthesis. Catalyzes the first committed step in the biosynthesis of AMP from IMP. This chain is Adenylosuccinate synthetase, found in Streptococcus agalactiae serotype III (strain NEM316).